A 136-amino-acid polypeptide reads, in one-letter code: Mediator of RNA polymerase II transcription subunit 31 (136 aa).

A compositionally biased stretch (low complexity) spans 117 to 128; it reads AEQQQQQQPQAP. The disordered stretch occupies residues 117 to 136; it reads AEQQQQQQPQAPSHANTTSK.

It belongs to the Mediator complex subunit 31 family. Component of the Mediator complex.

It localises to the nucleus. Component of the Mediator complex, a coactivator involved in the regulated transcription of nearly all RNA polymerase II-dependent genes. Mediator functions as a bridge to convey information from gene-specific regulatory proteins to the basal RNA polymerase II transcription machinery. Mediator is recruited to promoters by direct interactions with regulatory proteins and serves as a scaffold for the assembly of a functional preinitiation complex with RNA polymerase II and the general transcription factors. This is Mediator of RNA polymerase II transcription subunit 31 (med31) from Danio rerio (Zebrafish).